A 302-amino-acid polypeptide reads, in one-letter code: uncharacterized protein (302 aa).

9 helical membrane-spanning segments follow: residues 10–30 (VLSVLVLVLLGYILKVLGVLG), 65–85 (LVLIPVICMITGTLSGTIAYL), 102–122 (VAAAMMNSGFLGYPVTAGIFG), 130–150 (IFYDTGTTLMFTSLGLLLSHI), 162–182 (AVFFPPLWAFLLGVIFNLWGL), 190–210 (ILGYLSGAAVPLIMISLGLTL), 224–244 (LVSGLRLLISPLMAAGISYVL), 251–271 (FSVTVLEASMPSAMLAAVLAI), and 282–302 (SCIFMSTILSLVSLPLWSVVL).

Belongs to the auxin efflux carrier (TC 2.A.69) family.

Its subcellular location is the cell membrane. This is an uncharacterized protein from Methanothermobacter thermautotrophicus (strain ATCC 29096 / DSM 1053 / JCM 10044 / NBRC 100330 / Delta H) (Methanobacterium thermoautotrophicum).